The sequence spans 463 residues: Exodeoxyribonuclease 7 large subunit (463 aa).

It belongs to the XseA family. In terms of assembly, heterooligomer composed of large and small subunits.

The protein localises to the cytoplasm. It carries out the reaction Exonucleolytic cleavage in either 5'- to 3'- or 3'- to 5'-direction to yield nucleoside 5'-phosphates.. In terms of biological role, bidirectionally degrades single-stranded DNA into large acid-insoluble oligonucleotides, which are then degraded further into small acid-soluble oligonucleotides. This Klebsiella pneumoniae subsp. pneumoniae (strain ATCC 700721 / MGH 78578) protein is Exodeoxyribonuclease 7 large subunit.